Consider the following 418-residue polypeptide: tRNA-2-methylthio-N(6)-dimethylallyladenosine synthase (418 aa).

The 118-residue stretch at 1–118 folds into the MTTase N-terminal domain; it reads MNYLIETIGC…ALKIMNLFRT (118 aa). Residues Cys10, Cys46, Cys80, Cys143, Cys147, and Cys150 each coordinate [4Fe-4S] cluster. One can recognise a Radical SAM core domain in the interval 129 to 356; it reads IKSKIVRYIT…LKESNKISIE (228 aa). Positions 359 to 418 constitute a TRAM domain; the sequence is SEMLGSTQQVLAEEIKNGIIKARTKNGRKVFAEGRKEYIGKHINVNIKEAKINSLFGDIV.

Belongs to the methylthiotransferase family. MiaB subfamily. Monomer. [4Fe-4S] cluster is required as a cofactor.

The protein localises to the cytoplasm. The catalysed reaction is N(6)-dimethylallyladenosine(37) in tRNA + (sulfur carrier)-SH + AH2 + 2 S-adenosyl-L-methionine = 2-methylsulfanyl-N(6)-dimethylallyladenosine(37) in tRNA + (sulfur carrier)-H + 5'-deoxyadenosine + L-methionine + A + S-adenosyl-L-homocysteine + 2 H(+). Functionally, catalyzes the methylthiolation of N6-(dimethylallyl)adenosine (i(6)A), leading to the formation of 2-methylthio-N6-(dimethylallyl)adenosine (ms(2)i(6)A) at position 37 in tRNAs that read codons beginning with uridine. The protein is tRNA-2-methylthio-N(6)-dimethylallyladenosine synthase of Endomicrobium trichonymphae.